A 317-amino-acid chain; its full sequence is Uridylate kinase (317 aa).

9 to 12 (KISG) contributes to the ATP binding site. G49 provides a ligand contact to UMP. G50 and R54 together coordinate ATP. UMP is bound by residues D69 and 130 to 137 (TGRPYFTT). ATP is bound by residues N158, Y164, and D167.

Belongs to the UMP kinase family. Homohexamer.

The protein localises to the cytoplasm. It catalyses the reaction UMP + ATP = UDP + ADP. Its pathway is pyrimidine metabolism; CTP biosynthesis via de novo pathway; UDP from UMP (UMPK route): step 1/1. Its activity is regulated as follows. Inhibited by UTP. In terms of biological role, catalyzes the reversible phosphorylation of UMP to UDP. This chain is Uridylate kinase, found in Malacoplasma penetrans (strain HF-2) (Mycoplasma penetrans).